The following is a 513-amino-acid chain: Protein disulfide-isomerase (513 aa).

Positions 1–23 (MAIRSKAWISLLLALAVALSARA) are cleaved as a signal peptide. Residues 24–145 (EEEPAAAAEG…IVDYLKKQVG (122 aa)) enclose the Thioredoxin 1 domain. Active-site nucleophile residues include cysteine 63 and cysteine 66. Cysteines 63 and 66 form a disulfide. N-linked (GlcNAc...) asparagine glycosylation is present at asparagine 279. Positions 366–485 (FRNSEPIPEV…IVDFIKKSKE (120 aa)) constitute a Thioredoxin 2 domain. Active-site nucleophile residues include cysteine 408 and cysteine 411. Cysteines 408 and 411 form a disulfide. The tract at residues 485 to 513 (ETAAPHHHHHPGATGIREGSRAEPVKDEL) is disordered. The span at 502–513 (EGSRAEPVKDEL) shows a compositional bias: basic and acidic residues. Residues 510–513 (KDEL) carry the Prevents secretion from ER motif.

It belongs to the protein disulfide isomerase family.

It localises to the endoplasmic reticulum lumen. It carries out the reaction Catalyzes the rearrangement of -S-S- bonds in proteins.. Participates in the folding of proteins containing disulfide bonds, may be involved in glycosylation, prolyl hydroxylation and triglyceride transfer. In Zea mays (Maize), this protein is Protein disulfide-isomerase (PDI).